A 71-amino-acid chain; its full sequence is Small ribosomal subunit protein bS21 (71 aa).

The span at alanine 50–lysine 59 shows a compositional bias: basic residues. Residues alanine 50 to tyrosine 71 form a disordered region. Residues valine 60–tyrosine 71 show a composition bias toward basic and acidic residues.

This sequence belongs to the bacterial ribosomal protein bS21 family.

In Pseudomonas fluorescens (strain ATCC BAA-477 / NRRL B-23932 / Pf-5), this protein is Small ribosomal subunit protein bS21.